The primary structure comprises 830 residues: Lon protease (830 aa).

The disordered stretch occupies residues M1–E28. The 196-residue stretch at I50 to A245 folds into the Lon N-terminal domain. G397–T404 is an ATP binding site. The region spanning T633–E814 is the Lon proteolytic domain. Active-site residues include S720 and K763.

The protein belongs to the peptidase S16 family. Homohexamer. Organized in a ring with a central cavity.

It localises to the cytoplasm. The enzyme catalyses Hydrolysis of proteins in presence of ATP.. ATP-dependent serine protease that mediates the selective degradation of mutant and abnormal proteins as well as certain short-lived regulatory proteins. Required for cellular homeostasis and for survival from DNA damage and developmental changes induced by stress. Degrades polypeptides processively to yield small peptide fragments that are 5 to 10 amino acids long. Binds to DNA in a double-stranded, site-specific manner. The protein is Lon protease of Lawsonia intracellularis (strain PHE/MN1-00).